The following is a 70-amino-acid chain: Frenatin 4.1 (70 aa).

Positions 1–22 (MAFLKKSLFLVLFLGLVNLSIC) are cleaved as a signal peptide. Residues 23-46 (EEEKREEENKEEEDENEALSEVKR) constitute a propeptide that is removed on maturation. A Lysine amide modification is found at lysine 68.

Belongs to the frog skin active peptide (FSAP) family. Frenatin subfamily. In terms of tissue distribution, expressed by the skin glands.

The protein resides in the secreted. The protein localises to the target cell membrane. In terms of biological role, peptide with unknown function. Does not show antimicrobial activity against S.aureus (MIC&gt;512 ug/mL), E.coli (MIC&gt;512 ug/mL) and C.albicans (MIC&gt;512 ug/mL). Does not show hemolytic activity. Its function is as follows. Antimicrobial peptide with activity against E.coli (MIC=128 ug/mL or 54 uM) and C.albicans (MIC=256 ug/mL or 108 uM). Does not show activity against S.aureus (MIC&gt;512 ug/mL). Does not show hemolytic activity. This is Frenatin 4.1 from Nyctimystes infrafrenatus (White-lipped tree frog).